The chain runs to 704 residues: Fibulin-1 (704 aa).

The signal sequence occupies residues 1–25 (MDKLRGARPLRLLLLLLALLPALRG). 35 disulfide bridges follow: Cys33–Cys59, Cys34–Cys66, Cys47–Cys67, Cys76–Cys107, Cys89–Cys108, Cys110–Cys134, Cys111–Cys141, Cys124–Cys142, Cys181–Cys191, Cys187–Cys200, Cys202–Cys215, Cys221–Cys234, Cys228–Cys243, Cys249–Cys261, Cys267–Cys280, Cys274–Cys289, Cys295–Cys307, Cys313–Cys326, Cys320–Cys335, Cys342–Cys355, Cys361–Cys374, Cys368–Cys383, Cys385–Cys398, Cys404–Cys416, Cys412–Cys425, Cys427–Cys440, Cys446–Cys455, Cys451–Cys464, Cys466–Cys480, Cys486–Cys499, Cys495–Cys508, Cys510–Cys524, Cys530–Cys543, Cys537–Cys552, and Cys557–Cys578. Anaphylatoxin-like domains lie at 33 to 74 (CCDK…LEEH), 75 to 109 (YCSD…KCCY), and 110 to 142 (CCLL…RACC). A glycan (N-linked (GlcNAc...) asparagine) is linked at Asn96. The 40-residue stretch at 177–216 (LHDGCRGGGPCSQQCRDTGSSYVCSCFVGYQLQPDGVNCE) folds into the EGF-like 1 domain. The 46-residue stretch at 217-262 (DINECITGTHSCGIGQTCVNTLGSFRCQRDTSCGTGYELTDDSRCK) folds into the EGF-like 2; calcium-binding domain. Residues 263–308 (DIDECETGTHNCPPDFICQNTPGSFRCRPKLQCMNGFIQDALGNCI) enclose the EGF-like 3; calcium-binding domain. The 48-residue stretch at 309-356 (DINECLSTNMPCPAGQICINTDGSYTCQRISPSCGRGYHLNEDGTRCV) folds into the EGF-like 4; calcium-binding domain. Positions 357 to 399 (DVDECSSSDQPCGEGHVCINGPGNYRCECKSGYSFDVISRTCI) constitute an EGF-like 5; calcium-binding domain. The segment at 357–441 (DVDECSSSDQ…KLSSDGRSCE (85 aa)) is self-association and FN1-binding. One can recognise an EGF-like 6; calcium-binding domain in the interval 400-441 (DINECRRYPGRLCAHKCENTPGSYYCTCTMGFKLSSDGRSCE). The EGF-like 7; calcium-binding domain occupies 442–481 (DLNECESSPCSQECANVYGSYQCYCRRGFQLSDIDGISCE). In terms of domain architecture, EGF-like 8; calcium-binding spans 482-525 (DIDECALPTGGHICSFRCINIPGSFQCTCPSTGYRLAPNARNCQ). One can recognise an EGF-like 9; calcium-binding domain in the interval 526–579 (DIDECVAETHNCSFNETCFNIQGGFRCLSLECPENYRKSGDTVRLEKTDTIRCI). N-linked (GlcNAc...) asparagine glycans are attached at residues Asn536 and Asn540.

The protein belongs to the fibulin family. Homomultimerizes and interacts with various extracellular matrix components.

It localises to the secreted. Its subcellular location is the extracellular space. The protein localises to the extracellular matrix. Functionally, incorporated into fibronectin-containing matrix fibers. May play a role in cell adhesion and migration along protein fibers within the extracellular matrix (ECM). Could be important for certain developmental processes and contribute to the supramolecular organization of ECM architecture, in particular to those of basement membranes. This chain is Fibulin-1 (FBLN1), found in Gallus gallus (Chicken).